The sequence spans 259 residues: Dihydroorotate dehydrogenase B (NAD(+)), electron transfer subunit (259 aa).

The FAD-binding FR-type domain maps to 2–102 (MQKQNMIVVN…LGPLGHGFPV (101 aa)). Residues 53 to 56 (RPIS), 70 to 72 (LYR), and 77 to 78 (GT) each bind FAD. [2Fe-2S] cluster-binding residues include C221, C226, C229, and C246.

This sequence belongs to the PyrK family. In terms of assembly, heterotetramer of 2 PyrK and 2 PyrD type B subunits. The cofactor is [2Fe-2S] cluster. FAD is required as a cofactor.

The protein operates within pyrimidine metabolism; UMP biosynthesis via de novo pathway; orotate from (S)-dihydroorotate (NAD(+) route): step 1/1. In terms of biological role, responsible for channeling the electrons from the oxidation of dihydroorotate from the FMN redox center in the PyrD type B subunit to the ultimate electron acceptor NAD(+). This Bacillus cereus (strain G9842) protein is Dihydroorotate dehydrogenase B (NAD(+)), electron transfer subunit.